The following is a 397-amino-acid chain: Mannonate dehydratase (397 aa).

This sequence belongs to the mannonate dehydratase family. Fe(2+) is required as a cofactor. The cofactor is Mn(2+).

It carries out the reaction D-mannonate = 2-dehydro-3-deoxy-D-gluconate + H2O. The protein operates within carbohydrate metabolism; pentose and glucuronate interconversion. Functionally, catalyzes the dehydration of D-mannonate. The polypeptide is Mannonate dehydratase (Yersinia pestis bv. Antiqua (strain Antiqua)).